The chain runs to 61 residues: Putative neurotoxin-D (61 aa).

The N-terminal stretch at 1–19 is a signal peptide; it reads MRTTVAILLVLFALSAILA. 3 disulfides stabilise this stretch: cysteine 31-cysteine 51, cysteine 37-cysteine 56, and cysteine 39-cysteine 58.

As to expression, expressed by the venom gland.

It is found in the secreted. This is Putative neurotoxin-D from Lychas mucronatus (Chinese swimming scorpion).